The primary structure comprises 384 residues: MVTYAGKLVLAPMVRAGELPTRLMALAHGADLVWSPEIIDKKLIQCVRKENTALQTVDYVVPSKVQTRPETLVFRTYPKLESSKLIFQIGSASPALATQAALKVINDVSGIDINAGCPKHFSIHSGMGSALLRTPDTLCLILKELVKNVGNPHSKPISVKIRLLDTKQDTLQLVKRLCATGITNLTVHCRKTEMRNREQPITDYIAEIYEICQANNVSLIVNGAIRDRSHFHDLQANHWKNTNIGGMIAECAERDPTVFDHTSKPSEDGPSWVVACREFIQWATKFDNHIGNTKYMLSRIVPGKSVFFQYFARCKSPEEVSFVLKQLNDDGSAQTDPSEYLENCRAQEKALKNANAIAKQKRKQTDHIGSDTKKQKVVPLPTDI.

Residues 12-14 (PMV) and Gln-88 each bind FMN. The active-site Proton donor is Cys-117. FMN contacts are provided by residues Lys-160, His-188, 222–224 (NGA), and 249–250 (AE). Residues 359–384 (KQKRKQTDHIGSDTKKQKVVPLPTDI) form a disordered region. Over residues 363–374 (KQTDHIGSDTKK) the composition is skewed to basic and acidic residues.

Belongs to the Dus family. Dus2 subfamily. Monomer. The cofactor is FMN. Post-translationally, N-glycosylated.

Its subcellular location is the cytoplasm. It is found in the nucleus. The enzyme catalyses 5,6-dihydrouridine(20) in tRNA + NADP(+) = uridine(20) in tRNA + NADPH + H(+). It carries out the reaction 5,6-dihydrouridine(20) in tRNA + NAD(+) = uridine(20) in tRNA + NADH + H(+). The catalysed reaction is a 5,6-dihydrouridine in mRNA + NAD(+) = a uridine in mRNA + NADH + H(+). It catalyses the reaction a 5,6-dihydrouridine in mRNA + NADP(+) = a uridine in mRNA + NADPH + H(+). In terms of biological role, catalyzes the NADPH-dependent synthesis of dihydrouridine, a modified base found in the D-loop of most tRNAs. Specifically modifies U20 in cytoplasmic tRNAs. Also able to mediate dihydrouridylation of some mRNAs, thereby affecting their translation. The protein is tRNA-dihydrouridine(20) synthase [NAD(P)+] (SMM1) of Saccharomyces cerevisiae (strain ATCC 204508 / S288c) (Baker's yeast).